Consider the following 58-residue polypeptide: Large ribosomal subunit protein uL30 (58 aa).

The protein belongs to the universal ribosomal protein uL30 family. As to quaternary structure, part of the 50S ribosomal subunit.

The sequence is that of Large ribosomal subunit protein uL30 from Pseudomonas entomophila (strain L48).